The chain runs to 444 residues: Probable glycolate oxidase iron-sulfur subunit (444 aa).

4Fe-4S ferredoxin-type domains follow at residues 14-46 (FKERMDEGELLNCMRCGFCLPSCPTYIESGFQE) and 69-100 (EDVERSLSLCLGCRACEPVCPSGVKYGQLLEE). The [4Fe-4S] cluster site is built by cysteine 26, cysteine 29, cysteine 32, cysteine 36, cysteine 78, cysteine 81, cysteine 84, and cysteine 88.

The glycolate oxidase likely consists of several subunits including GlcD and GlcF. It depends on [4Fe-4S] cluster as a cofactor.

Its subcellular location is the cell membrane. It carries out the reaction glycolate + A = glyoxylate + AH2. The catalysed reaction is (R)-lactate + A = pyruvate + AH2. Its function is as follows. Component of a complex that catalyzes the oxidation of glycolate to glyoxylate. Is also able to oxidize D-lactate ((R)-lactate). Does not link directly to O(2), and 2,6-dichloroindophenol (DCIP) and phenazine methosulfate (PMS) can act as artificial electron acceptors in vitro, but the physiological molecule that functions as primary electron acceptor during glycolate oxidation is unknown. The protein is Probable glycolate oxidase iron-sulfur subunit (glcF) of Bacillus subtilis (strain 168).